We begin with the raw amino-acid sequence, 412 residues long: Serine hydroxymethyltransferase (412 aa).

(6S)-5,6,7,8-tetrahydrofolate is bound by residues Leu-117 and 121 to 123 (GHL). At Lys-226 the chain carries N6-(pyridoxal phosphate)lysine.

Belongs to the SHMT family. In terms of assembly, homodimer. Requires pyridoxal 5'-phosphate as cofactor.

It localises to the cytoplasm. The catalysed reaction is (6R)-5,10-methylene-5,6,7,8-tetrahydrofolate + glycine + H2O = (6S)-5,6,7,8-tetrahydrofolate + L-serine. The protein operates within one-carbon metabolism; tetrahydrofolate interconversion. Its pathway is amino-acid biosynthesis; glycine biosynthesis; glycine from L-serine: step 1/1. Catalyzes the reversible interconversion of serine and glycine with tetrahydrofolate (THF) serving as the one-carbon carrier. This reaction serves as the major source of one-carbon groups required for the biosynthesis of purines, thymidylate, methionine, and other important biomolecules. Also exhibits THF-independent aldolase activity toward beta-hydroxyamino acids, producing glycine and aldehydes, via a retro-aldol mechanism. The sequence is that of Serine hydroxymethyltransferase from Staphylococcus epidermidis (strain ATCC 35984 / DSM 28319 / BCRC 17069 / CCUG 31568 / BM 3577 / RP62A).